The primary structure comprises 532 residues: Membrane protein insertase YidC (532 aa).

The next 6 helical transmembrane spans lie at 6–26 (IVLAIILSLVVFLGWHSFAEY), 317–337 (AIDFGMFSIIAKPLLTALTFF), 342–362 (GNWGVAIIVLTLCIKIVFWPL), 411–431 (GGCLPILLQIPVFIGLYQALL), 451–473 (VWLADLSAADPFYITPLLMGASM), and 496–516 (PIIFTVMFLNFPAGLVIYWLF).

The protein belongs to the OXA1/ALB3/YidC family. Type 1 subfamily. Interacts with the Sec translocase complex via SecD. Specifically interacts with transmembrane segments of nascent integral membrane proteins during membrane integration.

It is found in the cell membrane. Its function is as follows. Required for the insertion and/or proper folding and/or complex formation of integral membrane proteins into the membrane. Involved in integration of membrane proteins that insert both dependently and independently of the Sec translocase complex, as well as at least some lipoproteins. Aids folding of multispanning membrane proteins. This is Membrane protein insertase YidC from Lawsonia intracellularis (strain PHE/MN1-00).